We begin with the raw amino-acid sequence, 83 residues long: Large ribosomal subunit protein bL31B (83 aa).

The protein belongs to the bacterial ribosomal protein bL31 family. Type B subfamily. In terms of assembly, part of the 50S ribosomal subunit.

In Levilactobacillus brevis (strain ATCC 367 / BCRC 12310 / CIP 105137 / JCM 1170 / LMG 11437 / NCIMB 947 / NCTC 947) (Lactobacillus brevis), this protein is Large ribosomal subunit protein bL31B.